Consider the following 66-residue polypeptide: Large ribosomal subunit protein bL33c (66 aa).

Belongs to the bacterial ribosomal protein bL33 family.

It localises to the plastid. The protein localises to the chloroplast. The sequence is that of Large ribosomal subunit protein bL33c from Illicium oligandrum (Star anise).